We begin with the raw amino-acid sequence, 173 residues long: MDIAIQHPWFKRTLGPFYPSRLFDQFFGEGLFEYDLLPFLSSTISPYYRQSLFRTVLDSGISEVRSDRDKFVIFLDVKHFSPEDLTVKVQEDFVEIHGKHNERQDDHGYISREFHRRYRLPSNVDQSALSCSLSADGMLTFSGPKIPSGVDAGHSERAIPVSREEKPSSAPSS.

Position 1 is an N-acetylmethionine (M1). The segment at 1-63 (MDIAIQHPWF…RTVLDSGISE (63 aa)) is required for complex formation with BFSP1 and BFSP2. Q6 bears the Deamidated glutamine; partial mark. K11 is a glycosylation site (N-linked (Glc) (glycation) lysine). S45 is modified (phosphoserine). Q50 is subject to Deamidated glutamine; partial. The sHSP domain maps to 52-162 (LFRTVLDSGI…GHSERAIPVS (111 aa)). At K70 the chain carries N6-acetyllysine. An N-linked (Glc) (glycation) lysine glycan is attached at K78. The residue at position 90 (Q90) is a Deamidated glutamine; partial. Position 99 is an N6-acetyllysine (K99). H100 contacts Zn(2+). A Deamidated asparagine; partial modification is found at N101. Zn(2+) is bound by residues E102 and H107. S122 bears the Phosphoserine mark. The residue at position 123 (N123) is a Deamidated asparagine; partial. Positions 144–173 (PKIPSGVDAGHSERAIPVSREEKPSSAPSS) are disordered. Positions 153–167 (GHSERAIPVSREEKP) are enriched in basic and acidic residues. H154 is a Zn(2+) binding site. The interval 157-163 (RAIPVSR) is important for oligomerization. A glycan (O-linked (GlcNAc) serine) is linked at S162.

The protein belongs to the small heat shock protein (HSP20) family. Heteromer composed of three CRYAA and one CRYAB subunits. Inter-subunit bridging via zinc ions enhances stability, which is crucial as there is no protein turn over in the lens. Can also form homodimers and homotetramers (dimers of dimers) which serve as the building blocks of homooligomers. Within homooligomers, the zinc-binding motif is created from residues of 3 different molecules. His-100 and Glu-102 from one molecule are ligands of the zinc ion, and His-107 and His-154 residues from additional molecules complete the site with tetrahedral coordination geometry. Part of a complex required for lens intermediate filament formation composed of BFSP1, BFSP2 and CRYAA. Acetylation at Lys-70 may increase chaperone activity. Post-translationally, undergoes age-dependent proteolytical cleavage at the C-terminus.

It localises to the cytoplasm. It is found in the nucleus. Functionally, contributes to the transparency and refractive index of the lens. Acts as a chaperone, preventing aggregation of various proteins under a wide range of stress conditions. Required for the correct formation of lens intermediate filaments as part of a complex composed of BFSP1, BFSP2 and CRYAA. In Bos taurus (Bovine), this protein is Alpha-crystallin A chain (CRYAA).